We begin with the raw amino-acid sequence, 384 residues long: 3,7-dimethylxanthine N-methyltransferase 1 (384 aa).

The S-adenosyl-L-homocysteine site is built by Tyr18, Cys61, Asn66, Asp100, Leu101, Ser139, Phe140, and Cys156. Theobromine is bound at residue Tyr157. S-adenosyl-L-homocysteine is bound at residue Cys158. 2 residues coordinate theobromine: His160 and Trp161. Asn178 contributes to the Mg(2+) binding site. A theobromine-binding site is contributed by Ser237. Mg(2+) is bound by residues Asp260, Phe262, and Asn263. Theobromine is bound at residue Tyr368.

It belongs to the methyltransferase superfamily. Type-7 methyltransferase family. It depends on Mg(2+) as a cofactor. In terms of tissue distribution, highly expressed in developing endosperm and immature fruits (grains). Detected in young leaves and flower buds, but not in mature fruits.

It carries out the reaction theobromine + S-adenosyl-L-methionine = caffeine + S-adenosyl-L-homocysteine + H(+). The enzyme catalyses 1,7-dimethylxanthine + S-adenosyl-L-methionine = caffeine + S-adenosyl-L-homocysteine + H(+). It catalyses the reaction 7-methylxanthine + S-adenosyl-L-methionine = theobromine + S-adenosyl-L-homocysteine + H(+). It participates in alkaloid biosynthesis. Its function is as follows. Involved in the biosynthesis of caffeine. Catalyzes the conversion of 7-methylxanthine to caffeine, likely via theobromine as an intermediate. The protein is 3,7-dimethylxanthine N-methyltransferase 1 of Coffea arabica (Arabian coffee).